The primary structure comprises 123 residues: Large ribosomal subunit protein uL22 (123 aa).

Belongs to the universal ribosomal protein uL22 family. Part of the 50S ribosomal subunit.

Its function is as follows. This protein binds specifically to 23S rRNA; its binding is stimulated by other ribosomal proteins, e.g. L4, L17, and L20. It is important during the early stages of 50S assembly. It makes multiple contacts with different domains of the 23S rRNA in the assembled 50S subunit and ribosome. Functionally, the globular domain of the protein is located near the polypeptide exit tunnel on the outside of the subunit, while an extended beta-hairpin is found that lines the wall of the exit tunnel in the center of the 70S ribosome. In Synechococcus sp. (strain JA-3-3Ab) (Cyanobacteria bacterium Yellowstone A-Prime), this protein is Large ribosomal subunit protein uL22.